A 148-amino-acid polypeptide reads, in one-letter code: Single-stranded DNA-binding protein 1-B, mitochondrial (148 aa).

Residues 1–17 (MFHRPVLQVFRQFARCQ) constitute a mitochondrion transit peptide. Residues 30–142 (MNKVQLLGRV…IIADNIIFLT (113 aa)) form the SSB domain.

As to quaternary structure, homotetramer.

It localises to the mitochondrion. Its subcellular location is the mitochondrion matrix. The protein localises to the mitochondrion nucleoid. In terms of biological role, binds preferentially and cooperatively to pyrimidine rich single-stranded DNA (ss-DNA). Required to maintain the copy number of mitochondrial DNA (mtDNA) and plays crucial roles during mtDNA replication that stimulate activity of the DNA polymerase at the replication fork. May also function in mtDNA repair. The chain is Single-stranded DNA-binding protein 1-B, mitochondrial (ssbp1-b) from Xenopus laevis (African clawed frog).